The following is a 241-amino-acid chain: Uracil-DNA glycosylase (241 aa).

Residue aspartate 71 is the Proton acceptor of the active site. The interval 221–241 is disordered; that stretch reads ISPIDWSLPPRNELDTTSAGA.

The protein belongs to the uracil-DNA glycosylase (UDG) superfamily. UNG family.

The protein resides in the cytoplasm. The enzyme catalyses Hydrolyzes single-stranded DNA or mismatched double-stranded DNA and polynucleotides, releasing free uracil.. Excises uracil residues from the DNA which can arise as a result of misincorporation of dUMP residues by DNA polymerase or due to deamination of cytosine. The chain is Uracil-DNA glycosylase from Xanthomonas oryzae pv. oryzae (strain MAFF 311018).